Reading from the N-terminus, the 373-residue chain is DNA replication and repair protein RecF (373 aa).

30–37 (GENAQGKT) serves as a coordination point for ATP.

The protein belongs to the RecF family.

It is found in the cytoplasm. Functionally, the RecF protein is involved in DNA metabolism; it is required for DNA replication and normal SOS inducibility. RecF binds preferentially to single-stranded, linear DNA. It also seems to bind ATP. The protein is DNA replication and repair protein RecF of Bacillus cytotoxicus (strain DSM 22905 / CIP 110041 / 391-98 / NVH 391-98).